The sequence spans 472 residues: Envelope glycoprotein O (472 aa).

An N-terminal signal peptide occupies residues 1 to 31; the sequence is MGKKEMIMVKGIPKIMLLISITFLLLSLINC. N-linked (GlcNAc...) asparagine; by host glycans are attached at residues Asn109, Asn136, Asn163, Asn168, Asn177, Asn225, Asn248, Asn294, Asn298, Asn356, Asn391, Asn398, Asn405, Asn439, and Asn460.

This sequence belongs to the herpesviridae U47 family. In terms of assembly, forms the envelope trimer complex composed of gH, gL, and gO. The trimer interacts with host PDGFRA. In terms of processing, N-glycosylated. The N-terminus is blocked.

The protein resides in the virion membrane. In terms of biological role, plays a role in viral entry into host cells. Forms a trimeric complex at the surface of the viral envelope together with gH and gL. This complex is required for entry in host fibroblasts. Mechanistically, engages host receptor(s) including PDGFRA to mediate infection. This Human cytomegalovirus (strain Merlin) (HHV-5) protein is Envelope glycoprotein O (UL74).